An 85-amino-acid polypeptide reads, in one-letter code: Large ribosomal subunit protein bL27 (85 aa).

The disordered stretch occupies residues 1–21 (MAHKKAGGSTRNGRDSNAQRL). The span at 9–19 (STRNGRDSNAQ) shows a compositional bias: polar residues.

It belongs to the bacterial ribosomal protein bL27 family.

This chain is Large ribosomal subunit protein bL27, found in Pectobacterium carotovorum subsp. carotovorum (strain PC1).